A 140-amino-acid polypeptide reads, in one-letter code: Dehydratase ustZ (140 aa).

Residues 18 to 113 (PGISTEDYRN…GPDHEKFADT (96 aa)) form the EthD domain.

This sequence belongs to the tpcK family.

The catalysed reaction is naphtopyrone YWA1 = norrubrofusarin + H2O + H(+). Its pathway is secondary metabolite biosynthesis. Its function is as follows. Dehydratase; part of the gene cluster that mediates the biosynthesis of ustilaginoidins, dimeric gamma-naphthopyrones isolated from different fungal species. The first step in the biosynthesis of ustilaginoidins is the production of gamma-naphthopyrone precursor YWA1 by the non-reducing polyketide synthase ustP, via condensation of one acetyl-CoA starter unit with 6 malonyl-CoA units. YWA1 is then probably substrate of the ustZ to yield norrubrofusarin via a dehydration reaction. A key enzyme in the biosynthetic pathway is the laccase ustL, which catalyzes the oxidative dimerization of norrubrofusarin to ustilaginoidin A. It can produce the M- and P-atropisomers in varying amounts, depending on the reaction conditions. For the biosynthesis of 3-methylustilaginoid in derivatives such as chaetochromin A, a methylated derivative of YWA1 is required. The C-methylation is considered to be catalyzed by ustM, the phosphopantetheine attachment site of which indicates that it acts on the growing polyketide chain before release of the product. For the biosynthesis of chaetochromin A, it is assumed that saturation of the D2 double bond takes place before dimerization, and is probably catalyzed by an external reductase because no candidate gene was identified within the cluster. The polypeptide is Dehydratase ustZ (Ustilaginoidea virens (Rice false smut fungus)).